A 417-amino-acid chain; its full sequence is Acetate kinase (417 aa).

N7 lines the Mg(2+) pocket. K14 is a binding site for ATP. Residue R104 participates in substrate binding. D162 (proton donor/acceptor) is an active-site residue. Residues 222 to 226 (HLGNG), 297 to 299 (DMR), and 346 to 350 (GIGEN) contribute to the ATP site. Mg(2+) is bound at residue E401.

It belongs to the acetokinase family. As to quaternary structure, homodimer. The cofactor is Mg(2+). It depends on Mn(2+) as a cofactor.

It localises to the cytoplasm. It carries out the reaction acetate + ATP = acetyl phosphate + ADP. Its pathway is metabolic intermediate biosynthesis; acetyl-CoA biosynthesis; acetyl-CoA from acetate: step 1/2. Its function is as follows. Catalyzes the formation of acetyl phosphate from acetate and ATP. Can also catalyze the reverse reaction. The sequence is that of Acetate kinase from Chloroherpeton thalassium (strain ATCC 35110 / GB-78).